A 128-amino-acid polypeptide reads, in one-letter code: Cyclin-dependent protein kinase inhibitor SMR1 (128 aa).

Residues 17–74 are disordered; the sequence is PIKIRSKTSKTKKDEGDDDEDDLRCSTPTSQEHKIPAVVDSPPPPPRKPRPPPSAPSA. Residues 57 to 71 show a composition bias toward pro residues; that stretch reads SPPPPPRKPRPPPSA.

Interacts with CDKB1-1. Interacts with CPR5. As to expression, expressed in roots, leaves, stems, siliques and flowers. Expressed in the root elongation zone.

Its subcellular location is the nucleus. In terms of biological role, probable cyclin-dependent protein kinase (CDK) inhibitor that functions as a repressor of mitosis in the endoreduplication cell cycle. Cooperates with SIM and SMR2 to promote endoreplication during leaf development. Specifically regulates endoreduplication in epidermal pavement cells to produce the cell size pattern. Is necessary for giant cell formation. Positive regulator of effector-triggered immunity (ETI). The sequence is that of Cyclin-dependent protein kinase inhibitor SMR1 from Arabidopsis thaliana (Mouse-ear cress).